Here is a 214-residue protein sequence, read N- to C-terminus: MRIILLGAPGAGKGTQANFIMDKYGIPQISTGDMLRAAIKAGTELGKQAKAVIDAGQLVSDEIILGLIKERIAQDDCEKGFLLDGFPRTIPQADGLKEMGVEVDYVIEFDVADDVIVERMAGRRAHLPSGRTYHVVYNPPKVEGKDDVTGEDLVVRDDDKEETVRARLGVYHEQTAPLIDYYGKEAAAGKTKYLKFDGTKQVAEVSADIEKALA.

ATP is bound at residue 10–15 (GAGKGT). The interval 30–59 (STGDMLRAAIKAGTELGKQAKAVIDAGQLV) is NMP. Residues Thr-31, Arg-36, 57–59 (QLV), 85–88 (GFPR), and Gln-92 contribute to the AMP site. The tract at residues 122-159 (GRRAHLPSGRTYHVVYNPPKVEGKDDVTGEDLVVRDDD) is LID. Residues Arg-123 and 132-133 (TY) contribute to the ATP site. AMP is bound by residues Arg-156 and Arg-167. Lys-200 provides a ligand contact to ATP.

It belongs to the adenylate kinase family. As to quaternary structure, monomer.

Its subcellular location is the cytoplasm. It carries out the reaction AMP + ATP = 2 ADP. The protein operates within purine metabolism; AMP biosynthesis via salvage pathway; AMP from ADP: step 1/1. Functionally, catalyzes the reversible transfer of the terminal phosphate group between ATP and AMP. Plays an important role in cellular energy homeostasis and in adenine nucleotide metabolism. The polypeptide is Adenylate kinase (Vibrio parahaemolyticus serotype O3:K6 (strain RIMD 2210633)).